Reading from the N-terminus, the 398-residue chain is Cytochrome b561 and DOMON domain-containing protein At3g61750 (398 aa).

An N-terminal signal peptide occupies residues 1–23; it reads MKTLVGFYILCFLIGQDLPFLAA. The 114-residue stretch at 64-177 folds into the DOMON domain; it reads NTFVLRYSEN…PRRAVILAFS (114 aa). The Cytochrome b561 domain occupies 184–377; sequence LGRLTKHDDK…LEIFRIRGTI (194 aa). A heme b-binding site is contributed by His220. Transmembrane regions (helical) follow at residues 222 to 242 and 252 to 272; these read VMAILGWGFLLPVGAILARYL and LHIGFQFTGFIFGLAAVILGI. The heme b site is built by His253 and His285. 3 consecutive transmembrane segments (helical) span residues 287 to 307, 320 to 340, and 351 to 371; these read GIGIFLLVLSTLQVLAFFARP, YHHWIGRISLFFGAVNIVLGI, and KIGYGFVLSVTLLAFVVLEIF. Residue His321 coordinates heme b.

Heme b is required as a cofactor.

The protein localises to the membrane. In terms of biological role, may act as a catecholamine-responsive trans-membrane electron transporter. This chain is Cytochrome b561 and DOMON domain-containing protein At3g61750, found in Arabidopsis thaliana (Mouse-ear cress).